Consider the following 401-residue polypeptide: MRPAGPVPVCCRAGRLMRVFILAGEPSGDRLGGALMAGLRQLCPDVQFDGVGGPAMESEGLSSRFPMAELSIMGLVEVLPKYFHLKRRIAETAQAVLAMRPDVMITIDSPDFSLRVARLVKDASDIRTVHYVAPSVWAWRPGRADKMAKVIDHVLALLPFEPPYMERAGMECDFVGHPVVTEPEATGADIAALRTELGLGAAPVLLALPGSRRGEVERLAPVFGAALRRFLPEHPDMRVVVPVVPHVADQVAQQVAEWPGAPVLVDPRGLAPAQAAMRKRAAFAAADLALAASGTVSLELAAAGTPMVIAYKVNWLTQKIAERMVTIDTVTLVNLVSETRVVPECLGPACTPENIAARLAAVHADPAAQDAAMRLTMERLGRGGTPPGLRAAQAVLDRLPG.

It belongs to the LpxB family.

It carries out the reaction a lipid X + a UDP-2-N,3-O-bis[(3R)-3-hydroxyacyl]-alpha-D-glucosamine = a lipid A disaccharide + UDP + H(+). The protein operates within bacterial outer membrane biogenesis; LPS lipid A biosynthesis. Condensation of UDP-2,3-diacylglucosamine and 2,3-diacylglucosamine-1-phosphate to form lipid A disaccharide, a precursor of lipid A, a phosphorylated glycolipid that anchors the lipopolysaccharide to the outer membrane of the cell. This is Lipid-A-disaccharide synthase from Ruegeria pomeroyi (strain ATCC 700808 / DSM 15171 / DSS-3) (Silicibacter pomeroyi).